Reading from the N-terminus, the 634-residue chain is Alpha-L-iduronidase (634 aa).

The signal sequence occupies residues 1 to 16 (MLTFFAAFLAAPLALA). 3 residues coordinate alpha-D-mannopyranose: Pro-44, Leu-46, and His-48. His-81 serves as a coordination point for alpha-L-iduronate. Residue Asn-100 is glycosylated (N-linked (GlcNAc...) asparagine). Alpha-L-iduronate-binding residues include Asn-171 and Glu-172. The active-site Proton donor is Glu-172. N-linked (GlcNAc...) asparagine glycosylation is found at Asn-180 and Asn-233. 3 residues coordinate alpha-L-iduronate: Lys-254, Glu-289, and Gly-295. Glu-289 acts as the Nucleophile in catalysis. Trp-296 contacts alpha-D-mannopyranose. Asn-326 carries N-linked (GlcNAc...) asparagine glycosylation. 2 residues coordinate alpha-L-iduronate: Asp-339 and Arg-353. N-linked (GlcNAc...) asparagine glycosylation is found at Asn-362, Asn-405, and Asn-441. The cysteines at positions 531 and 567 are disulfide-linked.

The protein belongs to the glycosyl hydrolase 39 family. Monomer. In terms of processing, N-glycosylation contributes to substrate binding and is required for full enzymatic activity. In terms of tissue distribution, ubiquitous.

It localises to the lysosome. The enzyme catalyses Hydrolysis of unsulfated alpha-L-iduronosidic linkages in dermatan sulfate.. The chain is Alpha-L-iduronidase (Idua) from Mus musculus (Mouse).